Reading from the N-terminus, the 510-residue chain is Serine/threonine protein phosphatase 2A 59 kDa regulatory subunit B' eta isoform (510 aa).

The tract at residues 1–87 (MWKQILSKLP…NNNNNNNNGV (87 aa)) is disordered. Positions 10–19 (PNKKSSKHEH) are enriched in basic residues. Positions 27 to 42 (HSSSSSHTSGASTSKS) are enriched in low complexity.

It belongs to the phosphatase 2A regulatory subunit B56 family. In terms of assembly, PP2A consists of a common heteromeric enzyme, composed of a catalytic subunit (subunits C), a constant regulatory subunit (subunit A), and a variety of regulatory subunits such as subunits B (the R2/B/PR55/B55, R3/B''/PR72/PR130/PR59 and R5/B'/B56 families). Interacts with BZR1. Interacts with BRI1.

It localises to the nucleus. The protein localises to the nucleolus. It is found in the cytoplasm. Functionally, the B regulatory subunit may modulate substrate selectivity and catalytic activity, and may also direct the localization of the catalytic enzyme to a particular subcellular compartment. The holoenzyme composed of PP2AA1, PP2A4 and B'ETA acts as negative regulator of plant innate immunity by controlling BAK1 phosphorylation state and activation in surface-localized immune receptor complexes. Required for the formation of the PP2A holoenzyme that negatively regulates brassinosteroid signaling by dephosphorylating and inactivating BRI1 in the cytoplasm. In Arabidopsis thaliana (Mouse-ear cress), this protein is Serine/threonine protein phosphatase 2A 59 kDa regulatory subunit B' eta isoform (B'ETA).